A 325-amino-acid polypeptide reads, in one-letter code: Thioredoxin reductase (325 aa).

FAD contacts are provided by residues 10–13, 39–40, Gln-44, Asn-53, Val-86, Cys-143, Asp-286, and 293–295; these read SGPS, IA, and RQA. A disulfide bridge links Cys-140 with Cys-143.

It belongs to the class-II pyridine nucleotide-disulfide oxidoreductase family. In terms of assembly, homodimer. FAD serves as cofactor.

The protein localises to the cytoplasm. It catalyses the reaction [thioredoxin]-dithiol + NADP(+) = [thioredoxin]-disulfide + NADPH + H(+). This Pneumocystis carinii protein is Thioredoxin reductase (TRR1).